The primary structure comprises 474 residues: F420-non-reducing hydrogenase vhc subunit A (474 aa).

Cys-61, Cys-64, Cys-445, and Cys-448 together coordinate Ni(2+).

It belongs to the [NiFe]/[NiFeSe] hydrogenase large subunit family. The F420-non-reducing hydrogenase vhc is composed of three subunits; VhcA, VhcD and VhcG. It depends on Ni(2+) as a cofactor.

This is F420-non-reducing hydrogenase vhc subunit A (vhcA) from Methanococcus voltae.